The chain runs to 181 residues: Probable cobalt-precorrin-6B C(15)-methyltransferase (decarboxylating) (181 aa).

Residues Thr-16, 40–44, Asp-61, and Ala-89 contribute to the S-adenosyl-L-methionine site; that span reads GCGSG.

Belongs to the methyltransferase superfamily. Archaeal-type CbiT family.

It carries out the reaction Co-precorrin-6B + S-adenosyl-L-methionine = Co-precorrin-7 + S-adenosyl-L-homocysteine + CO2. Its pathway is cofactor biosynthesis; adenosylcobalamin biosynthesis; cob(II)yrinate a,c-diamide from sirohydrochlorin (anaerobic route): step 8/10. Its function is as follows. Catalyzes the methylation of C-15 in cobalt-precorrin-6B followed by the decarboxylation of C-12 to form cobalt-precorrin-7. In Methanococcus maripaludis (strain DSM 14266 / JCM 13030 / NBRC 101832 / S2 / LL), this protein is Probable cobalt-precorrin-6B C(15)-methyltransferase (decarboxylating).